The primary structure comprises 476 residues: MATKLESFKVVEKLGVEKGEKGKMMSKKKNVKKDGDESESGFWFRFKFIFSCISSRSKVDSSMNATAVIAEPKKVIEKLEGHPAPTKDTGCAESGSSTPLMSGELKYSSKLRIFMFNDLKLATRNFRPESLLGEGGFGCVFKGWIEENGTAPVKPGTGLTVAVKTLNPDGLQGHKEWLAEINFLGNLVHPSLVKLVGYCMEEDQRLLVYEFMPRGSLENHLFRRTLPLPWSVRMKIALGAAKGLAFLHEEAEKPVIYRDFKTSNILLDGEYNAKLSDFGLAKDAPDEKKSHVSTRVMGTYGYAAPEYVMTGHLTTKSDVYSFGVVLLEILTGRRSVDKSRPNGEQNLVEWVRPHLLDKKRFYRLLDPRLEGHYSIKGAQKATQVAAQCLNRDSKARPKMSEVVEALKPLPNLKDFASSSSSFQTMQPVAKNGVRTQGGGFVSRNGPPMRSLSSLNLPQASPYRYARQSPKPKGKEP.

Positions 126–412 (FRPESLLGEG…VEALKPLPNL (287 aa)) constitute a Protein kinase domain. ATP-binding positions include 132–140 (LGEGGFGCV) and K164. Y209 carries the phosphotyrosine modification. The Proton acceptor role is filled by D259. Phosphoserine is present on residues S263 and S293. A phosphothreonine mark is found at T294 and T299. Y307 carries the post-translational modification Phosphotyrosine. A disordered region spans residues 431–476 (NGVRTQGGGFVSRNGPPMRSLSSLNLPQASPYRYARQSPKPKGKEP).

Belongs to the protein kinase superfamily. Ser/Thr protein kinase family. Interacts with SD129. Phosphorylated by SD129 in response to the pathogen-associated molecular pattern (PAMP) 3-OH-C10:0, a medium-chain 3-hydroxy fatty acid.

Its subcellular location is the cell membrane. It catalyses the reaction L-seryl-[protein] + ATP = O-phospho-L-seryl-[protein] + ADP + H(+). The enzyme catalyses L-threonyl-[protein] + ATP = O-phospho-L-threonyl-[protein] + ADP + H(+). In terms of biological role, involved in chitin-triggered immune signaling and is required for reactive oxygen species (ROS) production. Acts downstream of SD129 in defense signaling triggered by the pathogen-associated molecular pattern (PAMP) 3-OH-C10:0, a medium-chain 3-hydroxy fatty acid. This Arabidopsis thaliana (Mouse-ear cress) protein is Serine/threonine-protein kinase PBL36.